The primary structure comprises 189 residues: MINRIKISQVIVAEGRDDTTNLKRYFDVETYETRWSAINDQDIERIQRLHELHGVIVFTDPDFNDERIRRMIITVIPTVQHVFLKRDEAVPKSKTKGRSLGIEHASYEDLKTALAQVTEQFKNENEFDISRSDLIRLGFLAGADSRKRREYLGEQLRIGYSNGKQLLKRLELFGVTLAEVKEAMTKYSI.

Residues 8-91 (SQVIVAEGRD…VFLKRDEAVP (84 aa)) enclose the Toprim domain. The Mg(2+) site is built by E14, D60, and D62.

This sequence belongs to the ribonuclease M5 family. It depends on Mg(2+) as a cofactor.

Its subcellular location is the cytoplasm. It carries out the reaction Endonucleolytic cleavage of RNA, removing 21 and 42 nucleotides, respectively, from the 5'- and 3'-termini of a 5S-rRNA precursor.. In terms of biological role, required for correct processing of both the 5' and 3' ends of 5S rRNA precursor. Cleaves both sides of a double-stranded region yielding mature 5S rRNA in one step. This chain is Ribonuclease M5 2, found in Ligilactobacillus salivarius (strain UCC118) (Lactobacillus salivarius).